The following is a 413-amino-acid chain: MNIYAVGGAIRDELLGVPVQDRDYVVVGATPEQMTAQGFRAVGKDFPVFLHPQTQEEYALARTERKTAAGYHGFQFHYAPDVTLDEDLARRDLTINAMAREVSPEGALVGPVIDPFDGQADLRARVFRHVSDAFVEDPVRILRIARFAARFADFTVADETLALMRRMVDAGEVDALVPERVWQEIARGLMEAKPSRMFAVLRDCGALARILPEVDALWGVPQRADYHPEVDTGVHVMMVVDYAAKQGYSLAVRFAALTHDLGKGTTPADVLPRHVGHESRSVELLKPLCERLRVPNECRDLALVVAREHGNLHRVMEMGAAALVRLFERSDALRKPARFAELLQACESDARGRLGLDAQPYPQAERLRVALAAARSVDAGAIARGIGNDTEKIKEAVHRARIQAVAQALAIGE.

Residues G8 and R11 each coordinate ATP. The CTP site is built by G8 and R11. Positions 21 and 23 each coordinate Mg(2+). Positions 91, 143, and 146 each coordinate ATP. R91, R143, and R146 together coordinate CTP. The 102-residue stretch at 232–333 folds into the HD domain; it reads TGVHVMMVVD…VRLFERSDAL (102 aa).

Belongs to the tRNA nucleotidyltransferase/poly(A) polymerase family. Bacterial CCA-adding enzyme type 1 subfamily. Monomer. Can also form homodimers and oligomers. Requires Mg(2+) as cofactor. It depends on Ni(2+) as a cofactor.

The enzyme catalyses a tRNA precursor + 2 CTP + ATP = a tRNA with a 3' CCA end + 3 diphosphate. It catalyses the reaction a tRNA with a 3' CCA end + 2 CTP + ATP = a tRNA with a 3' CCACCA end + 3 diphosphate. Its function is as follows. Catalyzes the addition and repair of the essential 3'-terminal CCA sequence in tRNAs without using a nucleic acid template. Adds these three nucleotides in the order of C, C, and A to the tRNA nucleotide-73, using CTP and ATP as substrates and producing inorganic pyrophosphate. tRNA 3'-terminal CCA addition is required both for tRNA processing and repair. Also involved in tRNA surveillance by mediating tandem CCA addition to generate a CCACCA at the 3' terminus of unstable tRNAs. While stable tRNAs receive only 3'-terminal CCA, unstable tRNAs are marked with CCACCA and rapidly degraded. The sequence is that of Multifunctional CCA protein from Burkholderia cenocepacia (strain HI2424).